We begin with the raw amino-acid sequence, 380 residues long: uncharacterized protein (380 aa).

The signal sequence occupies residues Met1 to Ala28. The 74-residue stretch at Ala307–Phe380 folds into the SPOR domain.

This is an uncharacterized protein from Treponema pallidum (strain Nichols).